The following is a 327-amino-acid chain: Aldo/keto reductase slr0942 (327 aa).

Position 18-27 (Gly18–Gly27) interacts with NADP(+). The active-site Proton donor is the Tyr57. His119 provides a ligand contact to substrate. Ser216–Asn280 contacts NADP(+).

It belongs to the aldo/keto reductase family. In terms of assembly, monomer.

It catalyses the reaction a secondary alcohol + NADP(+) = a ketone + NADPH + H(+). Its activity is regulated as follows. Curcumin non-competitively inhibits the enzyme with respect to furfural. To a lesser extent, enzyme activity is also inhibited by indomethacin, coumarate, coumarin, and alrestatin. In terms of biological role, aldo/keto reductase with broad substrate spectrum. Catalyzes the NADPH-dependent reduction of aldehyde- and ketone-groups of different classes of carbonyl compounds to the corresponding alcohols. Highest enzymatic efficiency is observed with 4-oxonon-2-enal (4-ONE) and 4-hydroxynon-2-enal (4-HNE), that are lipid peroxidation products, and 9,10-phenanthrenequinone (9,10-PQ), a photoproduct of phenanthrene that is one of the most prevalent polycyclic aromatic hydrocarbons in the environment. Is also active on sugar-derived reactive carbonyls such as methylglyoxal (MG), glyoxal and 3-deoxyglucosone (3-DG), and on other lipid-derived carbonyls such as acrolein. May be involved in the detoxification of the toxic lipid peroxidation products 4-ONE and 4-HNE besides many other exo- and endogenic reactive carbonyl compounds (RCs) that may lead to photoinhibition or other cell damages. This Synechocystis sp. (strain ATCC 27184 / PCC 6803 / Kazusa) protein is Aldo/keto reductase slr0942.